A 397-amino-acid chain; its full sequence is Autophagy-related protein 29 (397 aa).

The tract at residues A71–Q397 is disordered. Acidic residues predominate over residues Q230 to E240. Polar residues predominate over residues P245–G259. The span at S269 to I282 shows a compositional bias: basic residues. Composition is skewed to basic and acidic residues over residues K300–E309 and G330–S341. Polar residues-rich tracts occupy residues G343–A363 and F381–Q397.

It belongs to the ATG29 family. As to quaternary structure, forms a stable complex with ATG17 and ATG31. Interacts directly with ATG31. The ATG17-ATG29-ATG31 complex interacts with the ATG1-ATG13 complex. Note=The interaction with the ATG1-ATG13 complex is induced by starvation.

It localises to the preautophagosomal structure. Plays a role in autophagy. Functions at the preautophagosomal structure (PAS) in order to form normal autophagosomes under starvation conditions. Also plays a role in mitophagy. Autophagy is required for proper vegetative growth, asexual/sexual reproduction, and full virulence. Autophagy is particularly involved in the biosynthesis of deoxynivalenol (DON), an important virulence determinant. In Gibberella zeae (strain ATCC MYA-4620 / CBS 123657 / FGSC 9075 / NRRL 31084 / PH-1) (Wheat head blight fungus), this protein is Autophagy-related protein 29.